The primary structure comprises 69 residues: Large ribosomal subunit protein uL29 (69 aa).

This sequence belongs to the universal ribosomal protein uL29 family.

In Rhodopseudomonas palustris (strain BisB5), this protein is Large ribosomal subunit protein uL29.